A 110-amino-acid polypeptide reads, in one-letter code: Quaternary ammonium compound-resistance protein QacF (110 aa).

4 helical membrane passes run 1–21 (MKNWIFLAVSIFGEVIATSAL), 31–51 (VPSVVVVAGYGLAFYFLSLAL), 58–78 (IAYAVWAGLGIVLVAAIAWIF), and 85–105 (FWAFIGMGLIVSGVAVLNLLS).

This sequence belongs to the drug/metabolite transporter (DMT) superfamily. Small multidrug resistance (SMR) (TC 2.A.7.1) family.

It is found in the cell membrane. Functionally, multidrug exporter. Is implicated for the resistance to bacteriocidal quaternary ammonium compounds. This Klebsiella aerogenes (Enterobacter aerogenes) protein is Quaternary ammonium compound-resistance protein QacF (qacF).